The sequence spans 245 residues: DnaJ homolog subfamily B member 6-B (245 aa).

The 67-residue stretch at 3 to 69 (EYYDVLGVQR…KKRDIYDKYG (67 aa)) folds into the J domain.

As to quaternary structure, homooligomer.

The protein localises to the cytoplasm. It localises to the perinuclear region. It is found in the nucleus. In terms of biological role, has a stimulatory effect on the ATPase activity of HSP70 in a dose-dependent and time-dependent manner and hence acts as a co-chaperone of HSP70. Plays an indispensable role in the organization of KRT8/KRT18 filaments. Acts as an endogenous molecular chaperone for neuronal proteins including huntingtin. Suppresses aggregation and toxicity of polyglutamine-containing, aggregation-prone proteins. Also reduces cellular toxicity and caspase-3 activity. This chain is DnaJ homolog subfamily B member 6-B (dnajb6-b), found in Xenopus laevis (African clawed frog).